Consider the following 519-residue polypeptide: Na(+)/H(+) exchange regulatory cofactor NHE-RF3 (519 aa).

The 82-residue stretch at 9–90 (ECKLSKQEGQ…SVTLLVLDGD (82 aa)) folds into the PDZ 1 domain. S108, S148, S192, S250, S334, and S348 each carry phosphoserine. PDZ domains follow at residues 134–215 (RLCY…VDKE) and 243–323 (IVEM…VDKE). Residues 347 to 374 (GSVKEAPAPTPTSLEVSSPPDTTEEVDH) form a disordered region. Polar residues predominate over residues 357-367 (PTSLEVSSPPD). The region spanning 378–458 (LCRLAKGENG…NVTLLVCGKK (81 aa)) is the PDZ 4 domain. Residue T451 is modified to Phosphothreonine. Residues 479-519 (DTPPDSKEGIVVESNHDSHMAKERAHSTASHSSSNSEDTEM) are disordered. Positions 482–504 (PDSKEGIVVESNHDSHMAKERAH) are enriched in basic and acidic residues. Phosphoserine is present on residues S492, S508, S510, S511, S512, and S514. Residues 505 to 519 (STASHSSSNSEDTEM) show a composition bias toward low complexity.

It belongs to the NHER family. Interacts with PDZK1IP1 and ABCC2. Interacts (via PDZ domains 1 and 3) with SCARB1 (C-terminal domain). Forms a heterodimeric complex with NHERF1. Interacts with AKAP2, BCR, CFTR, SLC22A12, SLC22A4, SLC22A5, NHERF2 and SLC17A1. Component of a complex, composed of PDZK1, SYNGAP1, KLHL17 and NMDA receptors. Interacts (via PDZ1 domain) directly with KLHL17; the interaction is important for integrity of actin cytoskeleton structures in neurons. Interacts (via the first PDZ domain) with PTGIR (via non-isoprenylated C-terminus). Interacts (via C-terminal PDZ domain) with SLC26A6 (via C-terminal domain). Interacts (via C-terminal PDZ domain) with SLC9A3 (via C-terminal domain). Interacts (via PDZ domains 1 and 3) with SLC5A8 (via PDZ-binding motif); interaction increases nicotinate transport activity of SLC5A8. In terms of tissue distribution, expression is limited to epithelial cells. Expressed in the kidney (brush border of proximal tubule), pancreas, liver, and small intestine. Expressed at a lower level in the adrenal cortex, testis and stomach. Overexpressed in breast, renal and lung carcinomas.

It is found in the membrane. It localises to the cell membrane. In terms of biological role, a scaffold protein that connects plasma membrane proteins and regulatory components, regulating their surface expression in epithelial cells apical domains. May be involved in the coordination of a diverse range of regulatory processes for ion transport and second messenger cascades. In complex with NHERF1, may cluster proteins that are functionally dependent in a mutual fashion and modulate the trafficking and the activity of the associated membrane proteins. May play a role in the cellular mechanisms associated with multidrug resistance through its interaction with ABCC2 and PDZK1IP1. May potentiate the CFTR chloride channel activity. Required for normal cell-surface expression of SCARB1. Plays a role in maintaining normal plasma cholesterol levels via its effects on SCARB1. Plays a role in the normal localization and function of the chloride-anion exchanger SLC26A6 to the plasma membrane in the brush border of the proximal tubule of the kidney. May be involved in the regulation of proximal tubular Na(+)-dependent inorganic phosphate cotransport therefore playing an important role in tubule function. This Homo sapiens (Human) protein is Na(+)/H(+) exchange regulatory cofactor NHE-RF3 (PDZK1).